Reading from the N-terminus, the 456-residue chain is Cobyrinate a,c-diamide synthase (456 aa).

Positions 247–439 (PIAIARDRAF…LHLHFGGKPW (193 aa)) constitute a GATase cobBQ-type domain. C330 serves as the catalytic Nucleophile.

The protein belongs to the CobB/CbiA family. Mg(2+) serves as cofactor.

The catalysed reaction is cob(II)yrinate + 2 L-glutamine + 2 ATP + 2 H2O = cob(II)yrinate a,c diamide + 2 L-glutamate + 2 ADP + 2 phosphate + 2 H(+). It participates in cofactor biosynthesis; adenosylcobalamin biosynthesis; cob(II)yrinate a,c-diamide from sirohydrochlorin (anaerobic route): step 10/10. Its function is as follows. Catalyzes the ATP-dependent amidation of the two carboxylate groups at positions a and c of cobyrinate, using either L-glutamine or ammonia as the nitrogen source. This is Cobyrinate a,c-diamide synthase from Synechococcus sp. (strain ATCC 27144 / PCC 6301 / SAUG 1402/1) (Anacystis nidulans).